The primary structure comprises 817 residues: MTSFQEVPLQTSNFAHVIFQNVAKSYLPNAHLECHYTLTPYIHPHPKDWVGIFKVGWSTARDYYTFLWSPMPEHYVEGSAVNCELAFQGYYLPNDDGEFYQFCYVTHKGEIRGASTPFQFRAASPVEELLTMEDEGNSDMLVVTTKAGLLELKIEKTMKEKEELLKLIAVLEKETTQLREQVGRMERELNHEKERGDQLQAEQKALTKVSQSLKMENEEFKKRYNDVTSKALQLEEDIVSVTHKAIEKETELDSLKDKLKKAQCEREQLECQLKTEKDEKELYKVHLKNTEIENTKLVSEVQTLKNLDGNKENMITHFKEEISRLQFSLAEKENLQRTFLLTTSSKEDTFILKEQLRKAEEQIQATRQEAVFLAKELSDAVNVRDKTMADLHTAHLENEKVKKQLTDALAELKLSAVNKDQEKTDTLEHELRREVEDLKLRLQMAADHYKEKFKECQRLQKQINKLSDQSANSNSVFTKKIGSQQKVNDASINTDPAATASTVDVKPLPSTAETDFDNLTKGQVSEMTKEIADKTEKYNKCKQLLQDEKTKCNKYADELAKMELKWKEQVKIAENIKLELAEVVDNYKLQLAEKEKEISGLTSYWENLSREKEHKRSVENQAERKLEGQNSQSPHQISQCLKTSSEKSGHVPAVSNTQPVLQYGNPYATPETRDGADGAFYPDEIQRPPVRVPSWGLEDNVVCSQPARNLSRPDGLEDPEDSKEDEKVPTAPDPPSQHLRGHGTGFCFDPSFDVQKKCPLCELMFPPNYDQSKFEEHVESHWKVCPMCSEQFPPDYDQQVFERHVQTHFDQNVLNFD.

A phosphoserine mark is found at serine 124 and serine 138. A coiled-coil region spans residues threonine 144–glycine 628. The segment at glutamate 320–aspartate 420 is oligomerization. Residues serine 609–glutamate 627 show a composition bias toward basic and acidic residues. Residues serine 609–isoleucine 685 are disordered. Serine 617 carries the post-translational modification Phosphoserine; by IKKA. Residues glycine 628–threonine 643 are compositionally biased toward polar residues. At serine 633 the chain carries Phosphoserine. Position 694 is a phosphoserine; by IKKA (serine 694). The tract at residues serine 704–histidine 742 is disordered. UBZ1-type zinc fingers lie at residues glutamine 755–histidine 781 and tryptophan 782–histidine 808. Zn(2+)-binding residues include cysteine 758, cysteine 761, histidine 777, histidine 781, cysteine 785, cysteine 788, histidine 804, and histidine 808.

As to quaternary structure, homooligomer. Interacts with TNFAIP3. Interacts with STARD13. Interacts with MYO6. Interacts with TOM1; the interaction is indirect and is mediated by MYO6, which acts as a bridge between TOM1 and TAX1BP1. Interacts with MAVS; this interaction induces MAVS polyubiquitination. Interacts with TNIP1. Interacts with TRAF6; this interaction mediates deubiquitination of TRAF6 and inhibition of NF-kappa-B activation. Interacts with RIPK1; this interaction negatively regulates RIPK1 ubiquitination. Interacts with NBR1. Interacts with TBK1. Interacts with RB1CC1. Interacts with SQSTM1. Interacts with AZI2. Phosphorylated in the C-terminal region by CHUK/IKKA leading to NF-kappa-B signaling down-regulation.

It is found in the cytoplasm. Its subcellular location is the mitochondrion. The protein localises to the preautophagosomal structure. It localises to the cytoplasmic vesicle. The protein resides in the autophagosome. Its function is as follows. Ubiquitin-binding adapter that participates in inflammatory, antiviral and innate immune processes as well as selective autophagy regulation. Plays a key role in the negative regulation of NF-kappa-B and IRF3 signalings by acting as an adapter for the ubiquitin-editing enzyme A20/TNFAIP3 to bind and inactivate its substrates. Disrupts the interactions between the E3 ubiquitin ligase TRAF3 and TBK1/IKBKE to attenuate 'Lys63'-linked polyubiquitination of TBK1 and thereby IFN-beta production. Also recruits A20/TNFAIP3 to ubiquitinated signaling proteins TRAF6 and RIPK1, leading to their deubiquitination and disruption of IL-1 and TNF-induced NF-kappa-B signaling pathways. Inhibits virus-induced apoptosis by inducing the 'Lys-48'-linked polyubiquitination and degradation of MAVS via recruitment of the E3 ligase ITCH, thereby attenuating MAVS-mediated apoptosis signaling. As a macroautophagy/autophagy receptor, facilitates the xenophagic clearance of pathogenic bacteria such as Salmonella typhimurium and Mycobacterium tuberculosis. Upon NBR1 recruitment to the SQSTM1-ubiquitin condensates, acts as the major recruiter of RB1CC1 to these ubiquitin condensates to promote their autophagic degradation. This Bos taurus (Bovine) protein is Tax1-binding protein 1 homolog (TAX1BP1).